The sequence spans 1153 residues: Integrin alpha-M (1153 aa).

The signal sequence occupies residues 1-16; that stretch reads MTLKALLVTALALCHG. The Extracellular segment spans residues 17–1105; that stretch reads FNLDTEHPMT…TKVEPYEVHN (1089 aa). 2 FG-GAP repeats span residues 18–75 and 76–135; these read NLDT…RCHP and IPLQ…RPPQ. Residue Asn58 is glycosylated (N-linked (GlcNAc...) asparagine). A disulfide bond links Cys66 and Cys73. An N-linked (GlcNAc...) asparagine glycan is attached at Asn86. Cysteines 105 and 123 form a disulfide. The VWFA domain occupies 164 to 338; it reads IDFQKMKEFV…QEKIFAIEGT (175 aa). FG-GAP repeat units follow at residues 339-390, 391-442, 443-503, 506-564, and 569-629; these read QTGS…VTFI, NTTR…FGTW, EPHT…RARW, EALL…ASLS, and HRII…FSPK. The N-linked (GlcNAc...) asparagine glycan is linked to Asn391. Residues Asp465, Asp467, Asp469, Asn471, Asn473, Asp529, Asn531, Asp533, Asp537, Asp592, Asp596, and Asp600 each coordinate Ca(2+). Residues Cys654 and Cys711 are joined by a disulfide bond. 10 N-linked (GlcNAc...) asparagine glycosylation sites follow: Asn696, Asn734, Asn772, Asn801, Asn881, Asn907, Asn941, Asn980, Asn994, and Asn1022. A disulfide bridge links Cys770 with Cys776. 2 disulfides stabilise this stretch: Cys999–Cys1023 and Cys1028–Cys1033. Asn1045, Asn1051, and Asn1076 each carry an N-linked (GlcNAc...) asparagine glycan. A helical transmembrane segment spans residues 1106–1129; sequence PVPLIVGSSIGGLVLLALITAGLY. Over 1130 to 1153 the chain is Cytoplasmic; it reads KLGFFKRQYKDMMNEAAPQDAPPQ. The GFFKR motif motif lies at 1132–1136; it reads GFFKR.

This sequence belongs to the integrin alpha chain family. In terms of assembly, heterodimer of an alpha and a beta subunit. ITGAM associates with ITGB2. Found in a complex with CD177 and ITGB2/CD18. Interacts with JAM3. Interacts with THBD. Interacts with complement factor H/CFH; this interaction mediates adhesion of neutrophils to pathogens leading to pathogen clearance. Interacts with TMEM268; this interaction inhibits ITGAM degradation via the endosome-lysosome pathway. Predominantly expressed in monocytes and granulocytes. Expressed in a subset of peritoneal mast cells. Expressed in microglia (at protein level).

It localises to the cell membrane. Its subcellular location is the membrane raft. Functionally, integrin ITGAM/ITGB2 is implicated in various adhesive interactions of monocytes, macrophages and granulocytes as well as in mediating the uptake of complement-coated particles and pathogens. It is identical with CR-3, the receptor for the iC3b fragment of the third complement component. It probably recognizes the R-G-D peptide in C3b. Integrin ITGAM/ITGB2 is also a receptor for fibrinogen, factor X and ICAM1. It recognizes P1 and P2 peptides of fibrinogen gamma chain. Regulates neutrophil migration. In association with beta subunit ITGB2/CD18, required for CD177-PRTN3-mediated activation of TNF primed neutrophils. May regulate phagocytosis-induced apoptosis in extravasated neutrophils. May play a role in mast cell development. Required with TYROBP/DAP12 in microglia to control production of microglial superoxide ions which promote the neuronal apoptosis that occurs during brain development. The polypeptide is Integrin alpha-M (Itgam) (Mus musculus (Mouse)).